Reading from the N-terminus, the 268-residue chain is Aliphatic sulfonates import ATP-binding protein SsuB 3 (268 aa).

Residues 1 to 27 (MTAAEAPLPPLAPRERTATTAAERRTG) are disordered. The segment covering 13-26 (PRERTATTAAERRT) has biased composition (basic and acidic residues). Residues 32-247 (VSLSGVRKSF…DRNDPEALRY (216 aa)) enclose the ABC transporter domain. 64-71 (GPSGTGKT) is an ATP binding site.

This sequence belongs to the ABC transporter superfamily. Aliphatic sulfonates importer (TC 3.A.1.17.2) family. The complex is composed of two ATP-binding proteins (SsuB), two transmembrane proteins (SsuC) and a solute-binding protein (SsuA).

The protein localises to the cell membrane. It catalyses the reaction ATP + H2O + aliphatic sulfonate-[sulfonate-binding protein]Side 1 = ADP + phosphate + aliphatic sulfonateSide 2 + [sulfonate-binding protein]Side 1.. Functionally, part of the ABC transporter complex SsuABC involved in aliphatic sulfonates import. Responsible for energy coupling to the transport system. This is Aliphatic sulfonates import ATP-binding protein SsuB 3 from Rhodococcus jostii (strain RHA1).